Here is a 1095-residue protein sequence, read N- to C-terminus: Putative disease resistance protein At4g11170 (1095 aa).

Residues 9-173 (WRYDVFPSFR…TISKDVLEKL (165 aa)) enclose the TIR domain. Glutamate 84 is a catalytic residue. Positions 168–454 (DVLEKLNATP…HENYLKQMII (287 aa)) constitute an NB-ARC domain. LRR repeat units lie at residues 609-631 (CLVE…QPLR), 632-654 (NLRT…MEAT), 655-677 (KLNR…IKNL), 679-701 (HLIL…INLP), 702-722 (SLEV…EIST), and 723-744 (NIRL…VKYW).

The catalysed reaction is NAD(+) + H2O = ADP-D-ribose + nicotinamide + H(+). The protein is Putative disease resistance protein At4g11170 of Arabidopsis thaliana (Mouse-ear cress).